The following is a 778-amino-acid chain: Serine/threonine-protein kinase BRSK1 (778 aa).

Over residues 1–12 (MSSGSKEGGGGS) the composition is skewed to gly residues. The interval 1–29 (MSSGSKEGGGGSPAYHLPHPHPHPPQHAQ) is disordered. Residues 34-285 (YRLEKTLGKG…LEQIQKHPWY (252 aa)) enclose the Protein kinase domain. ATP is bound by residues 40-48 (LGKGQTGLV) and Lys-63. Residue Asp-156 is the Proton acceptor of the active site. Thr-189 carries the post-translational modification Phosphothreonine; by LKB1. Ser-193 carries the post-translational modification Phosphoserine. Residues 314–356 (ELDPDVLESMASLGCFRDRERLHRELRSEEENQEKMIYYLLLD) enclose the UBA domain. A compositionally biased stretch (basic and acidic residues) spans 362–383 (PSCEDQDLPPRNDVDPPRKRVD). A disordered region spans residues 362-548 (PSCEDQDLPP…SPGGGVGGAA (187 aa)). A phosphoserine mark is found at Ser-399, Ser-443, Ser-447, and Ser-450. Over residues 430–457 (SRSVSGASTGLSSSPLSSPRSPVFSFSP) the composition is skewed to low complexity. 4 positions are modified to omega-N-methylarginine: Arg-466, Arg-481, Arg-484, and Arg-498. The span at 491–508 (QPPPPSARSTPLPGPPGS) shows a compositional bias: pro residues. Ser-508 is modified (phosphoserine). Residues 509-533 (PRSSGGTPLHSPLHTPRASPTGTPG) show a composition bias toward low complexity. An Omega-N-methylarginine modification is found at Arg-525. Thr-529 and Thr-535 each carry phosphothreonine. Arg-550 is modified (omega-N-methylarginine). Thr-583 is modified (phosphothreonine). A phosphoserine mark is found at Ser-586, Ser-587, and Ser-601. Positions 719-778 (QPSVQALADEKNGAQTRPAGTPPRSLQPPPGRPDPDLSSSPRRGPSKDKKLLATNGTPLP) are disordered.

This sequence belongs to the protein kinase superfamily. CAMK Ser/Thr protein kinase family. SNF1 subfamily. The cofactor is Mg(2+). Post-translationally, phosphorylated at Thr-189 by STK11/LKB1 in complex with STE20-related adapter-alpha (STRADA) pseudo kinase and CAB39. Not phosphorylated at Thr-189 by CaMKK2. In contrast, it is phosphorylated and activated by CaMKK1. May be inactivated via dephosphorylation of Thr-189 by PP2C. May be autophosphorylated. Mainly present in brain. Present in presynaptic nerve terminals (at protein level).

The protein resides in the cytoplasm. The protein localises to the nucleus. It localises to the cytoskeleton. It is found in the microtubule organizing center. Its subcellular location is the centrosome. The protein resides in the synapse. The protein localises to the presynaptic active zone. It localises to the cytoplasmic vesicle. It is found in the secretory vesicle. Its subcellular location is the synaptic vesicle. The catalysed reaction is L-seryl-[protein] + ATP = O-phospho-L-seryl-[protein] + ADP + H(+). It carries out the reaction L-threonyl-[protein] + ATP = O-phospho-L-threonyl-[protein] + ADP + H(+). The enzyme catalyses L-seryl-[tau protein] + ATP = O-phospho-L-seryl-[tau protein] + ADP + H(+). It catalyses the reaction L-threonyl-[tau protein] + ATP = O-phospho-L-threonyl-[tau protein] + ADP + H(+). Activated by phosphorylation on Thr-189 by STK11/LKB1. Its function is as follows. Serine/threonine-protein kinase that plays a key role in polarization of neurons and centrosome duplication. Phosphorylates CDC25B, CDC25C, MAPT/TAU, RIMS1, TUBG1, TUBG2 and WEE1. Following phosphorylation and activation by STK11/LKB1, acts as a key regulator of polarization of cortical neurons, probably by mediating phosphorylation of microtubule-associated proteins such as MAPT/TAU at 'Thr-523' and 'Ser-573'. Also regulates neuron polarization by mediating phosphorylation of WEE1 at 'Ser-642' in postmitotic neurons, leading to down-regulate WEE1 activity in polarized neurons. Also acts as a positive regulator of centrosome duplication by mediating phosphorylation of gamma-tubulin (TUBG1 and TUBG2) at 'Ser-131', leading to translocation of gamma-tubulin and its associated proteins to the centrosome. Involved in the UV-induced DNA damage checkpoint response, probably by inhibiting CDK1 activity through phosphorylation and activation of WEE1, and inhibition of CDC25B and CDC25C. In neurons, localizes to synaptic vesicles and plays a role in neurotransmitter release, possibly by phosphorylating RIMS1. The sequence is that of Serine/threonine-protein kinase BRSK1 (Brsk1) from Rattus norvegicus (Rat).